The chain runs to 115 residues: Probable non-functional immunoglobulin heavy variable 8-51-1 (115 aa).

A signal peptide spans 1–17 (MLVCVLLYSFRLFGIQG). Residues 18-42 (EAQLTESGGDLVHLEGPLRLSCAAS) are framework-1. Residues 19–115 (AQLTESGGDL…QNMAAFNCAG (97 aa)) form the Ig-like domain. The segment at 43–50 (WFTFSIYE) is complementarity-determining-1. The segment at 51-67 (IHWVCQASGKGLEWVAV) is framework-2. C55 and C113 form a disulfide bridge. Residues 68 to 75 (IWRGESHQ) form a complementarity-determining-2 region. The framework-3 stretch occupies residues 76-113 (YNADYVRGRLTTSRDNTKYMLYMQMISLRTQNMAAFNC). The tract at residues 114-115 (AG) is complementarity-determining-3.

In terms of assembly, immunoglobulins are composed of two identical heavy chains and two identical light chains; disulfide-linked.

The protein resides in the secreted. It is found in the cell membrane. In terms of biological role, probable non-functional open reading frame (ORF) of V region of the variable domain of immunoglobulin heavy chains. Non-functional ORF generally cannot participate in the synthesis of a productive immunoglobulin chain due to altered V-(D)-J or switch recombination and/or splicing site (at mRNA level) and/or conserved amino acid change (protein level). Immunoglobulins, also known as antibodies, are membrane-bound or secreted glycoproteins produced by B lymphocytes. In the recognition phase of humoral immunity, the membrane-bound immunoglobulins serve as receptors which, upon binding of a specific antigen, trigger the clonal expansion and differentiation of B lymphocytes into immunoglobulins-secreting plasma cells. Secreted immunoglobulins mediate the effector phase of humoral immunity, which results in the elimination of bound antigens. The antigen binding site is formed by the variable domain of one heavy chain, together with that of its associated light chain. Thus, each immunoglobulin has two antigen binding sites with remarkable affinity for a particular antigen. The variable domains are assembled by a process called V-(D)-J rearrangement and can then be subjected to somatic hypermutations which, after exposure to antigen and selection, allow affinity maturation for a particular antigen. The chain is Probable non-functional immunoglobulin heavy variable 8-51-1 from Homo sapiens (Human).